The chain runs to 790 residues: MKITSTSCICPVLVCLCFVQRCYGTAHHSSIKVMRNQTKHIEGETEVHHRPKRGWVWNQFFVLEEHMGPDPQYVGKLHSNSDKGDGSVKYILTGEGAGTIFIIDDTTGDIHSTKSLDREQKTHYVLHAQAIDRRTNKPLEPESEFIIKVQDINDNAPKFTDGPYIVTVPEMSDMGTSVLQVTATDADDPTYGNSARVVYSILQGQPYFSVDPKTGVIRTALHNMDREAREHYSVVIQAKDMAGQVGGLSGSTTVNITLTDVNDNPPRFPQKHYQLYVPESAQVGSAVGKIKANDADTGSNADMTYSIINGDGMGIFSISTDKETREGILSLKKPLNYEKKKSYTLNIEGANTHLDFRFSHLGPFKDATMLKIIVGDVDEPPLFSMPSYLMEVYENAKIGTVVGTVLAQDPDSTNSLVRYFINYNVEDDRFFNIDANTGTIRTTKVLDREETPWYNITVTASEIDNPDLLSHVTVGIRVLDVNDNPPELAREYDIIVCENSKPGQVIHTISATDKDDFANGPRFNFFLDERLPVNPNFTLKDNEDNTASILTRRRRFSRTVQDVYYLPIMISDGGIPSLSSSSTLTIRVCACERDGRVRTCHAEAFLSSAGLSTGALIAILLCVLILLAIVVLFITLRRSKKEPLIISEEDVRENVVTYDDEGGGEEDTEAFDITALRNPSAAEELKYRRDIRPEVKLTPRHQTSSTLESIDVQEFIKQRLAEADLDPSVPPYDSLQTYAYEGQRSEAGSISSLDSATTQSDQDYHYLGDWGPEFKKLAELYGEIESERTT.

The first 24 residues, 1–24 (MKITSTSCICPVLVCLCFVQRCYG), serve as a signal peptide directing secretion. Positions 25 to 53 (TAHHSSIKVMRNQTKHIEGETEVHHRPKR) are excised as a propeptide. The N-linked (GlcNAc...) asparagine glycan is linked to Asn36. Cadherin domains follow at residues 54-159 (GWVW…APKF), 160-268 (TDGP…PPRF), 269-383 (PQKH…PPLF), 384-486 (SMPS…DNPP), and 487-608 (ELAR…FLSS). Over 54-608 (GWVWNQFFVL…TCHAEAFLSS (555 aa)) the chain is Extracellular. Asn255 is a glycosylation site (N-linked (GlcNAc...) asparagine). N-linked (GlcNAc...) asparagine glycans are attached at residues Asn455 and Asn536. The helical transmembrane segment at 609-636 (AGLSTGALIAILLCVLILLAIVVLFITL) threads the bilayer. The Cytoplasmic segment spans residues 637-790 (RRSKKEPLII…YGEIESERTT (154 aa)). Ser786 carries the post-translational modification Phosphoserine.

The protein resides in the cell membrane. Functionally, cadherins are calcium-dependent cell adhesion proteins. They preferentially interact with themselves in a homophilic manner in connecting cells; cadherins may thus contribute to the sorting of heterogeneous cell types. In Homo sapiens (Human), this protein is Cadherin-18 (CDH18).